The sequence spans 110 residues: Nucleoid-associated protein CbuK_1603 (110 aa).

Belongs to the YbaB/EbfC family. Homodimer.

The protein localises to the cytoplasm. Its subcellular location is the nucleoid. Functionally, binds to DNA and alters its conformation. May be involved in regulation of gene expression, nucleoid organization and DNA protection. The protein is Nucleoid-associated protein CbuK_1603 of Coxiella burnetii (strain CbuK_Q154) (Coxiella burnetii (strain Q154)).